Consider the following 300-residue polypeptide: Iron-dependent extradiol dioxygenase (300 aa).

2 consecutive VOC domains span residues 5–120 and 142–270; these read SLGY…VFHG and GMGH…FGCE. A Fe cation-binding site is contributed by histidine 145. Histidine 200, histidine 215, aspartate 250, and tyrosine 256 together coordinate substrate. Residue histidine 215 participates in Fe cation binding. A Fe cation-binding site is contributed by glutamate 266.

The protein belongs to the extradiol ring-cleavage dioxygenase family. As to quaternary structure, homodimer, but may form a homooctamer. Fe(2+) serves as cofactor.

It carries out the reaction 3,4-dihydroxy-9,10-secoandrosta-1,3,5(10)-triene-9,17-dione + O2 = (1E,2Z)-3-hydroxy-5,9,17-trioxo-4,5:9,10-disecoandrosta-1(10),2-dien-4-oate + H(+). It participates in steroid metabolism; cholesterol metabolism. Its function is as follows. Catalyzes the meta-cleavage of 3,4-dihydroxy-9,10-seconandrost-1,3,5(10)-triene-9,17-dione (3,4-DHSA) to produce 4,5-9,10-diseco-3-hydroxy-5,9,17-trioxoandrosta-1(10),2-diene-4-oic acid (4,9-DSHA). The sequence is that of Iron-dependent extradiol dioxygenase (hsaC) from Mycobacterium tuberculosis (strain CDC 1551 / Oshkosh).